A 363-amino-acid chain; its full sequence is Heat-inducible transcription repressor HrcA (363 aa).

The protein belongs to the HrcA family.

Its function is as follows. Negative regulator of class I heat shock genes (grpE-dnaK-dnaJ and groELS operons). Prevents heat-shock induction of these operons. In Afipia carboxidovorans (strain ATCC 49405 / DSM 1227 / KCTC 32145 / OM5) (Oligotropha carboxidovorans), this protein is Heat-inducible transcription repressor HrcA.